Reading from the N-terminus, the 62-residue chain is Beta-defensin 10 (62 aa).

Positions 1–22 are cleaved as a signal peptide; sequence MRLHHLLLLLLLVVLSSGSGFT. Pyrrolidone carboxylic acid is present on glutamine 23. 3 disulfides stabilise this stretch: cysteine 31–cysteine 60, cysteine 38–cysteine 53, and cysteine 43–cysteine 61.

The protein belongs to the beta-defensin family. Neutrophilic granules.

It is found in the secreted. Functionally, has bactericidal activity. Active against E.coli ML35 and S.aureus 502A. This Bos taurus (Bovine) protein is Beta-defensin 10 (DEFB10).